Consider the following 276-residue polypeptide: Carbonic anhydrase Nec1 (276 aa).

The signal sequence occupies residues 1–27 (MKMINSIFTHGSLIILLLLFHSISIKA). The Alpha-carbonic anhydrase domain occupies 34–270 (REFDYLEGSE…LNHREVQLHC (237 aa)). An intrachain disulfide couples Cys-59 to Cys-220. His-98 (proton acceptor) is an active-site residue. Residues His-124 and His-126 each contribute to the Zn(2+) site. The N-linked (GlcNAc...) asparagine glycan is linked to Asn-134. His-143 serves as a coordination point for Zn(2+). Positions 216-217 (TT) are substrate binding.

The protein belongs to the alpha-class carbonic anhydrase family. In terms of assembly, homodimer. Zn(2+) serves as cofactor. Confined to nectaries.

The catalysed reaction is hydrogencarbonate + H(+) = CO2 + H2O. It participates in one-carbon metabolism. Its function is as follows. Involved in the production of blood-red nectar containing the alkaloid nesocodin and that serves as a visual attractant for pollinator visitation, including vertebrates such as Phelsuma geckos. The nectar is initially acidic and pale yellow, but slowly becomes alkaline before turning into red within 24 hours. Together with NEC2 and NEC3, facilitates the condensation of sinapaldehyde ((E)-3,5-dimethoxy-4-hydroxycinnamaldehyde) and proline to form nesocodin, a pigment with a stable imine bond. Mediates the alkalinization (pH increase) of the flower nectar by catalyzing the reversible hydration of carbon dioxide. The sequence is that of Carbonic anhydrase Nec1 from Nesocodon mauritianus (Blue Mauritius bellflower).